The following is a 320-amino-acid chain: Cytochrome f (320 aa).

The first 35 residues, 1–35 (MQNRNTFSWVKEQMTRFISVSIMIYVITRTSISNA), serve as a signal peptide directing secretion. Y36, C56, C59, and H60 together coordinate heme. A helical transmembrane segment spans residues 286–306 (VQGLLFFLASVILAQIFLVLK).

Belongs to the cytochrome f family. In terms of assembly, the 4 large subunits of the cytochrome b6-f complex are cytochrome b6, subunit IV (17 kDa polypeptide, petD), cytochrome f and the Rieske protein, while the 4 small subunits are PetG, PetL, PetM and PetN. The complex functions as a dimer. It depends on heme as a cofactor.

Its subcellular location is the plastid. The protein localises to the chloroplast thylakoid membrane. Its function is as follows. Component of the cytochrome b6-f complex, which mediates electron transfer between photosystem II (PSII) and photosystem I (PSI), cyclic electron flow around PSI, and state transitions. The polypeptide is Cytochrome f (Drimys granadensis).